The chain runs to 241 residues: Large ribosomal subunit protein uL30 (241 aa).

The segment at 1 to 25 is disordered; it reads MASTLKPETLVKKSKAQQKTAEERA.

It belongs to the universal ribosomal protein uL30 family.

The chain is Large ribosomal subunit protein uL30 (RPL7) from Debaryomyces hansenii (strain ATCC 36239 / CBS 767 / BCRC 21394 / JCM 1990 / NBRC 0083 / IGC 2968) (Yeast).